Here is a 351-residue protein sequence, read N- to C-terminus: Protein disulfide isomerase CRELD2 (351 aa).

Residues Met-1–Ala-21 form the signal peptide. The CXXC motif lies at Cys-28–Cys-31. Intrachain disulfides connect Cys-28–Cys-31, Cys-137–Cys-151, Cys-145–Cys-163, and Cys-165–Cys-174. Positions Asp-133–Ser-175 constitute an EGF-like 1 domain. The FU 1 repeat unit spans residues His-190–Pro-237. Asn-248 carries N-linked (GlcNAc...) asparagine glycosylation. One copy of the FU 2 repeat lies at Ser-250 to Pro-297. A CXXC motif is present at residues Cys-260–Cys-263. Intrachain disulfides connect Cys-260-Cys-263, Cys-291-Cys-305, Cys-298-Cys-314, and Cys-316-Cys-327. An EGF-like 2; calcium-binding domain is found at Asp-287–Val-328. The interval Gln-329 to Leu-351 is disordered.

The protein belongs to the CRELD family. As to quaternary structure, interacts with CHRNA4. Component of a complex containing at least CRELD2, MANF, MATN3 and PDIA4.

Its subcellular location is the endoplasmic reticulum. It carries out the reaction Catalyzes the rearrangement of -S-S- bonds in proteins.. Its function is as follows. Protein disulfide isomerase. Might play a role in the unfolded protein response. May regulate transport of alpha4-beta2 neuronal acetylcholine receptor. The sequence is that of Protein disulfide isomerase CRELD2 (CRELD2) from Bos taurus (Bovine).